Here is a 673-residue protein sequence, read N- to C-terminus: Glycine--tRNA ligase beta subunit (673 aa).

It belongs to the class-II aminoacyl-tRNA synthetase family. Tetramer of two alpha and two beta subunits.

The protein localises to the cytoplasm. It carries out the reaction tRNA(Gly) + glycine + ATP = glycyl-tRNA(Gly) + AMP + diphosphate. In Lactococcus lactis subsp. cremoris (strain MG1363), this protein is Glycine--tRNA ligase beta subunit.